The following is a 159-amino-acid chain: Ribosomal RNA large subunit methyltransferase H (159 aa).

Residues L76, G108, and 127-132 each bind S-adenosyl-L-methionine; that span reads FGLLTL.

It belongs to the RNA methyltransferase RlmH family. Homodimer.

Its subcellular location is the cytoplasm. The enzyme catalyses pseudouridine(1915) in 23S rRNA + S-adenosyl-L-methionine = N(3)-methylpseudouridine(1915) in 23S rRNA + S-adenosyl-L-homocysteine + H(+). In terms of biological role, specifically methylates the pseudouridine at position 1915 (m3Psi1915) in 23S rRNA. The sequence is that of Ribosomal RNA large subunit methyltransferase H from Streptococcus equi subsp. zooepidemicus (strain H70).